The primary structure comprises 536 residues: Prolyl 3-hydroxylase sudestada1 (536 aa).

The interval 1 to 35 (METSSSSPVKPRRKDKDEDGRAEQEDSADQVGEPH) is disordered. A compositionally biased stretch (basic and acidic residues) spans 14-24 (KDKDEDGRAEQ). The Fe2OG dioxygenase domain maps to 165–275 (KLDYVSASCS…RLTINGWFHG (111 aa)). Fe cation is bound by residues His185 and Asp187. Tyr199 contributes to the 2-oxoglutarate binding site. His254 is a Fe cation binding site. Arg266 is a binding site for 2-oxoglutarate. The disordered stretch occupies residues 467–486 (PTAKAPTDGRRSDYDDEEED).

It belongs to the TPA1 family. Monomer. The cofactor is Fe(2+). It depends on L-ascorbate as a cofactor. In terms of tissue distribution, in third-instar larval tissues,highly expressed in the fat body, with significant expression in other organs including the brain, salivary glands, imaginal disks and gut.

The protein resides in the nucleus. It is found in the cytoplasm. It carries out the reaction [ribosomal protein uS12]-L-proline + 2-oxoglutarate + O2 = [ribosomal protein uS12]-(3S)-3-hydroxy-L-proline + succinate + CO2. Its function is as follows. Prolyl 3-hydroxylase that catalyzes 3-hydroxylation of 'Pro-62' of small ribosomal subunit uS12 (RpS23), thereby regulating protein translation termination efficiency. The polypeptide is Prolyl 3-hydroxylase sudestada1 (sud1) (Drosophila melanogaster (Fruit fly)).